Consider the following 456-residue polypeptide: Alcohol acyltransferase 1 (456 aa).

Active-site proton acceptor residues include H166 and D382.

Belongs to the plant acyltransferase family. Expressed in fruit.

It catalyses the reaction 3-(methylsulfanyl)propanoyl-CoA + butan-1-ol = butyl 3-(methylsulfanyl)propanoate + CoA. The catalysed reaction is ethanol + benzoyl-CoA = ethyl benzoate + CoA. The enzyme catalyses butan-1-ol + benzoyl-CoA = butyl benzoate + CoA. It carries out the reaction 2-(methylsulfanyl)acetyl-CoA + butan-1-ol = butyl 2-(methylsulfanyl)acetate + CoA. Functionally, involved in the biosynthesis of volatile esters which confer kiwifruit flavor. Alcohol acyl transferase that can use a wide range of alcohols as substrate to produce esters. Exhibits benzoyl-CoA:alcohol O-acyltransferase activity. The chain is Alcohol acyltransferase 1 from Actinidia deliciosa (Kiwi).